A 476-amino-acid polypeptide reads, in one-letter code: MSYAQTKTQTKSGYKAGVQDYRLTYYTPDYTPKDTDILAAFRVTPQPGVPFEEAAAAVAAESSTGTWTTVWTDLLTDLDRYKGRCYDIEPVPGEDNQFIAYIAYPLDLFEEGSITNVLTSIVGNVFGFKALRALRLEDIRFPVAYIKTFQGPPHGIQVERDKLNKYGRPLLGCTIKPKLGLSAKNYGRAVYECLRGGLDFTKDDENINSAPFQRWRDRFLFVADAITKAQAETGEIKGHYLNVTAPTCEEMLKRAEYAKELKQPIIMHDYLTAGFTANTTLARWCRDNGVLLHIHRAMHAVIDRQKNHGIHFRVLAKALRLSGGDHIHTGTVVGKLEGERGITMGFVDLLRENYVEQDKSRGIYFTQDWASLPGVMAVASGGIHVWHMPALVEIFGDDSVLQFGGGTLGHPWGNAPGATANRVALEACVQARNEGRNLAREGNDVIREAAKWSPELAVACELWKEIKFEFEAMDTV.

Substrate is bound by residues Asn124 and Thr174. Lys176 serves as the catalytic Proton acceptor. Substrate is bound at residue Lys178. Residues Lys202, Asp204, and Glu205 each contribute to the Mg(2+) site. N6-carboxylysine is present on Lys202. His295 serves as the catalytic Proton acceptor. Residues Arg296, His328, and Ser380 each contribute to the substrate site.

The protein belongs to the RuBisCO large chain family. Type I subfamily. In terms of assembly, heterohexadecamer of 8 large chains and 8 small chains; disulfide-linked. The disulfide link is formed within the large subunit homodimers. Forms complexes of many stoichiometries with Raf1 with and without RbcS. RuBisCO interacts with the C-terminus of CcmM. Mg(2+) is required as a cofactor. Post-translationally, the disulfide bond which can form in the large chain dimeric partners within the hexadecamer appears to be associated with oxidative stress and protein turnover.

It localises to the carboxysome. It carries out the reaction 2 (2R)-3-phosphoglycerate + 2 H(+) = D-ribulose 1,5-bisphosphate + CO2 + H2O. It catalyses the reaction D-ribulose 1,5-bisphosphate + O2 = 2-phosphoglycolate + (2R)-3-phosphoglycerate + 2 H(+). Functionally, ruBisCO catalyzes two reactions: the carboxylation of D-ribulose 1,5-bisphosphate, the primary event in carbon dioxide fixation, as well as the oxidative fragmentation of the pentose substrate in the photorespiration process. Both reactions occur simultaneously and in competition at the same active site. The protein is Ribulose bisphosphate carboxylase large chain of Nostoc sp. (strain PCC 7120 / SAG 25.82 / UTEX 2576).